The following is a 282-amino-acid chain: AB hydrolase superfamily protein FGSG_00045 (282 aa).

A compositionally biased stretch (polar residues) spans M1–S10. Residues M1–T22 form a disordered region. The AB hydrolase-1 domain occupies T22–I270.

The protein belongs to the AB hydrolase superfamily.

The protein operates within mycotoxin biosynthesis. Functionally, AB hydrolase superfamily protein; part of the gene cluster that mediates the biosynthesis of gramillins A and B, bicyclic lipopeptides that induce cell death in maize leaves but not in wheat leaves. The nonribosomal peptide synthetase GRA1 incorporates respectively a glutamic adic (Glu), a leucine (Leu), a serine (Ser), a hydroxyglutamine (HOGln), a 2-amino decanoic acid, and 2 cysteins (CysB and CysA). The biosynthesis of 2-amino decanoic acid incorporated in gramillins could be initiated by a fatty acid synthase composed of the alpha and beta subunits FGSG_00036 and FGSG_11656. The cytochrome P450 monooxygenase FGSG_15680 could hydroxylate the fatty acid chain. Subsequent oxidation to the ketone by the oxidoreductase FGSG_00048 and transamination by aminotransferase FGSG_00049 could form 2-amino-decanoic acid. On the other hand, FGSG_15680 could also be responsible for the HO-modified glutamine at the gamma-position. Whether hydroxylation occurs on the fully assembled product or on the Gln residue prior to assembly into the gramillins requires further proof. The thioredoxin FGSG_00043 could also be required for the disulfide-bond formation between CysA and CysB. The specific involvement of the remaining proteins from the cluster is more difficult to discern, but could have broader regulatory (FGSG_00040 and FGSG_11657) or enzymatic functions (FGSG_00044 and FGSG_00045). The final C-domain of GRA1 does not possess the expected sequence of a termination CT domain, often implicated in macrocyclization and release of a cyclopeptidein fungal NRPs; and the thioesterase FGSG_00047 may act in concert with the terminal C-domain of GRA1 to catalyze the formation of the macrocyclic anhydride and release of the products. In Gibberella zeae (strain ATCC MYA-4620 / CBS 123657 / FGSC 9075 / NRRL 31084 / PH-1) (Wheat head blight fungus), this protein is AB hydrolase superfamily protein FGSG_00045.